The sequence spans 452 residues: Glutamyl-tRNA(Gln) amidotransferase subunit A (452 aa).

Residues Lys56 and Ser131 each act as charge relay system in the active site. Ser155 functions as the Acyl-ester intermediate in the catalytic mechanism.

It belongs to the amidase family. GatA subfamily. In terms of assembly, heterotrimer of A, B and C subunits.

It catalyses the reaction L-glutamyl-tRNA(Gln) + L-glutamine + ATP + H2O = L-glutaminyl-tRNA(Gln) + L-glutamate + ADP + phosphate + H(+). Allows the formation of correctly charged Gln-tRNA(Gln) through the transamidation of misacylated Glu-tRNA(Gln) in organisms which lack glutaminyl-tRNA synthetase. The reaction takes place in the presence of glutamine and ATP through an activated gamma-phospho-Glu-tRNA(Gln). This is Glutamyl-tRNA(Gln) amidotransferase subunit A from Campylobacter curvus (strain 525.92).